The following is a 483-amino-acid chain: Glutamate--tRNA ligase (483 aa).

The 'HIGH' region signature appears at 11 to 21 (PSPTGHLHIGN). The 'KMSKS' region signature appears at 252 to 256 (KLSKR). An ATP-binding site is contributed by K255.

This sequence belongs to the class-I aminoacyl-tRNA synthetase family. Glutamate--tRNA ligase type 1 subfamily. As to quaternary structure, monomer.

The protein resides in the cytoplasm. It carries out the reaction tRNA(Glu) + L-glutamate + ATP = L-glutamyl-tRNA(Glu) + AMP + diphosphate. Its function is as follows. Catalyzes the attachment of glutamate to tRNA(Glu) in a two-step reaction: glutamate is first activated by ATP to form Glu-AMP and then transferred to the acceptor end of tRNA(Glu). This chain is Glutamate--tRNA ligase, found in Bacillus velezensis (strain DSM 23117 / BGSC 10A6 / LMG 26770 / FZB42) (Bacillus amyloliquefaciens subsp. plantarum).